The chain runs to 97 residues: MSSGATPSNVVLVGKKPVMNYVLAALTLLNQGVSEITIKARGRAISKAVDTVEIVRNRFLPDKIEVKEIRIGSQVVTSQDGRQSRVSTIEIGIRKKA.

K15 bears the N6-acetyllysine mark.

It belongs to the histone-like Alba family. In terms of processing, acetylated. Acetylation at Lys-15 decreases DNA-binding affinity.

It localises to the cytoplasm. It is found in the chromosome. Functionally, binds double-stranded DNA tightly but without sequence specificity. Involved in DNA compaction. This Sulfolobus acidocaldarius (strain ATCC 33909 / DSM 639 / JCM 8929 / NBRC 15157 / NCIMB 11770) protein is DNA/RNA-binding protein Alba.